The following is a 289-amino-acid chain: Oxaloacetate decarboxylase (289 aa).

Residue Ser-50 participates in substrate binding. Asp-88 provides a ligand contact to Mg(2+). The substrate site is built by Arg-159 and His-235.

It belongs to the isocitrate lyase/PEP mutase superfamily. Oxaloacetate decarboxylase family. Homotetramer; dimer of dimers. Mg(2+) serves as cofactor.

It catalyses the reaction oxaloacetate + H(+) = pyruvate + CO2. Its function is as follows. Catalyzes the decarboxylation of oxaloacetate into pyruvate. Seems to play a role in maintaining cellular concentrations of bicarbonate and pyruvate. This chain is Oxaloacetate decarboxylase, found in Pseudomonas putida (strain GB-1).